Consider the following 971-residue polypeptide: Nuclear factor NF-kappa-B p110 subunit (971 aa).

The segment covering 23-41 (STSGYSSSTSPNSTNRSFS) has biased composition (low complexity). The tract at residues 23-46 (STSGYSSSTSPNSTNRSFSPAHSP) is disordered. The 193-residue stretch at 147–339 (KHVPQLRIVE…NAINNRKSAQ (193 aa)) folds into the RHD domain. The residue at position 431 (S431) is a Phosphoserine; by PKA. Positions 452–457 (SRKRRR) match the Nuclear localization signal motif. The segment at 453 to 496 (RKRRRTGSSANSSSSGTESSNNSLDLPKTLGLAQPPNGLPNLSQ) is disordered. Residues 460–475 (SSANSSSSGTESSNNS) are compositionally biased toward low complexity. T620 carries the post-translational modification Phosphothreonine. Phosphotyrosine is present on Y626. ANK repeat units lie at residues 640 to 669 (DGDS…NPNL), 673 to 702 (AGNT…TVQL), 710 to 740 (DGLT…SISV), 745 to 775 (DGNN…NLTD), and 783 to 812 (AGHT…EKGE). The tract at residues 826–877 (IDSSSDESSDAGQLEIKSEEMDIETKDEDSVELDLSSGPRRQKDESSRDTEM) is disordered. The segment covering 866–877 (RQKDESSRDTEM) has biased composition (basic and acidic residues). S950 carries the post-translational modification Phosphoserine.

As to quaternary structure, rel-p68 subunit interacts with Dredd. Interacts with DMAP1. Interacts with akirin; interaction is immune stimulation-dependent; activates selected rel target gene promoters. In terms of processing, phosphorylated by lipopolysaccharide (LPS)-activated I-kappa-B kinase complex before being cleaved. Rel-p110 subunit is cleaved within seconds of an immune challenge into Rel-p49 subunit and Rel-p68 subunit. Rel-p110 subunit reappears after 45 minutes.

Its subcellular location is the nucleus. It is found in the cytoplasm. Functionally, transcription factor that plays a key role in the humoral immune response as part of the peptidoglycan recognition protein (IMD) signaling pathway. Rel-p68 subunit translocates to the nucleus where it binds to the promoter of the Cecropin A1 gene and probably other antimicrobial peptide genes. I-kappa-B kinase complex (IKKbeta and key) and PGRP-LC are essential signaling components in transmitting the lipopolysaccharide (LPS) signal leading to cact degradation for NF-kappa-B (rel) activation. Part of a Toll-related receptor pathway that functions in the apoptosis of unfit cells during cell competition. Also part of some antiviral immunity: activated downstream of Sting signaling, which detects double-stranded RNA (dsRNA) from viruses, and promotes expression of antiviral effector genes. May be part of a NF-kappa-B and Tollo signaling cascade that regulates development of the peripheral nervous system. Possibly post-transcriptionally regulates the neuron-specific genes sc and ase, by promoting the rapid turnover of their transcripts in the wing imaginal disk. In Drosophila melanogaster (Fruit fly), this protein is Nuclear factor NF-kappa-B p110 subunit.